The primary structure comprises 142 residues: Small ribosomal subunit protein uS12 (142 aa).

The protein belongs to the universal ribosomal protein uS12 family. In terms of assembly, part of the 30S ribosomal subunit.

With S4 and S5 plays an important role in translational accuracy. Located at the interface of the 30S and 50S subunits. The chain is Small ribosomal subunit protein uS12 from Methanococcoides burtonii (strain DSM 6242 / NBRC 107633 / OCM 468 / ACE-M).